A 184-amino-acid polypeptide reads, in one-letter code: UPF0301 protein Rsph17029_2659 (184 aa).

Belongs to the UPF0301 (AlgH) family.

The protein is UPF0301 protein Rsph17029_2659 of Cereibacter sphaeroides (strain ATCC 17029 / ATH 2.4.9) (Rhodobacter sphaeroides).